The sequence spans 500 residues: ERAD-associated E3 ubiquitin-protein ligase HRD1 (500 aa).

Topologically, residues 1-3 (MIR) are cytoplasmic. A helical membrane pass occupies residues 4–24 (LQTYAAFSLMATATAVYYAFS). Topologically, residues 25–40 (SREQFYPAMVYLSTSK) are lumenal. Residues 41-61 (ICFVLLLNTGLVAMCVAWQLV) form a helical membrane-spanning segment. Residues 62–98 (KRLFLGTLREAEVERLNEQAWREVVEILFAVTIFRQD) are Cytoplasmic-facing. The chain crosses the membrane as a helical span at residues 99-119 (FSVSFLAMVAALLLVKALHWL). The Lumenal portion of the chain corresponds to 120–135 (AQKRVEYIETTPSVPM). Residues 136–156 (LSHARIVSFMLFLLVVDCLFL) traverse the membrane as a helical segment. Over 157-170 (SNSLRSLIHKREAS) the chain is Cytoplasmic. The chain crosses the membrane as a helical span at residues 171-191 (VAIFFSFEYMILATSTVSTFV). Over 192-225 (KYIFYVSDMLMEGQWEKKAVYTFYLELISDLVHL) the chain is Lumenal. A helical membrane pass occupies residues 226 to 246 (SLYMLFFIAIFLNYGVPLHLI). Residues 247–500 (RELYETFRNF…NENGEHTKSD (254 aa)) lie on the Cytoplasmic side of the membrane. An RING-type; atypical zinc finger spans residues 292 to 330 (CIICREEMTTAKKLLCGHLFHVHCLRSWLERQHTCPTCR). 2 disordered regions span residues 337 to 375 (DNGRTAARPHGVHPGVQPVPGNGTPGSERAAGENISRRQ) and 398 to 438 (NNLN…SAPT). The segment covering 348 to 358 (VHPGVQPVPGN) has biased composition (low complexity). Over residues 398-426 (NNLNRYSTPPQSTSNGPQSGEASTSNQSP) the composition is skewed to polar residues.

Belongs to the HRD1 family.

It localises to the endoplasmic reticulum membrane. It carries out the reaction S-ubiquitinyl-[E2 ubiquitin-conjugating enzyme]-L-cysteine + [acceptor protein]-L-lysine = [E2 ubiquitin-conjugating enzyme]-L-cysteine + N(6)-ubiquitinyl-[acceptor protein]-L-lysine.. It functions in the pathway protein modification; protein ubiquitination. Functionally, probable component of the HRD1 ubiquitin ligase complex that mediates the rapid degradation of misfolded endoplasmic reticulum (ER) proteins, a process called ER-associated degradation (ERAD). The sequence is that of ERAD-associated E3 ubiquitin-protein ligase HRD1 from Oryza sativa subsp. japonica (Rice).